The sequence spans 93 residues: Small ribosomal subunit protein bS20c (93 aa).

The protein belongs to the bacterial ribosomal protein bS20 family.

The protein resides in the plastid. Its subcellular location is the chloroplast. Its function is as follows. Binds directly to 16S ribosomal RNA. The sequence is that of Small ribosomal subunit protein bS20c from Trieres chinensis (Marine centric diatom).